The primary structure comprises 249 residues: Undecaprenyl-diphosphatase (249 aa).

Helical transmembrane passes span G11–F31, P35–V55, I74–F94, I101–L121, I135–I155, A175–M195, F208–A228, and G229–I249.

Belongs to the UppP family.

It is found in the cell membrane. It catalyses the reaction di-trans,octa-cis-undecaprenyl diphosphate + H2O = di-trans,octa-cis-undecaprenyl phosphate + phosphate + H(+). Functionally, catalyzes the dephosphorylation of undecaprenyl diphosphate (UPP). The chain is Undecaprenyl-diphosphatase from Methanococcus vannielii (strain ATCC 35089 / DSM 1224 / JCM 13029 / OCM 148 / SB).